Consider the following 733-residue polypeptide: Arginine decarboxylase 1A, chloroplastic (733 aa).

A chloroplast-targeting transit peptide spans Met-1–Val-44. The residue at position 157 (Lys-157) is an N6-(pyridoxal phosphate)lysine. Residues Ser-309, Gly-346, and Glu-395–Arg-398 contribute to the pyridoxal 5'-phosphate site. Tyr-460–Ala-461 is a binding site for substrate. Cys-548 functions as the Proton donor; shared with dimeric partner in the catalytic mechanism. Asp-549 is a binding site for substrate. Tyr-592 is a pyridoxal 5'-phosphate binding site.

The protein belongs to the Orn/Lys/Arg decarboxylase class-II family. SpeA subfamily. In terms of assembly, interacts, via its C-terminal internal region, with the tobacco mosaic virus (TMV) replicase helicase region. Mg(2+) is required as a cofactor. Pyridoxal 5'-phosphate serves as cofactor.

The protein localises to the plastid. Its subcellular location is the chloroplast. The catalysed reaction is L-arginine + H(+) = agmatine + CO2. It functions in the pathway alkaloid biosynthesis; nicotine biosynthesis. Its pathway is amine and polyamine biosynthesis; agmatine biosynthesis; agmatine from L-arginine: step 1/1. In terms of biological role, involved in the biosynthesis of pyridine alkaloid natural products, leading mainly to the production of anabasine, anatabine, nicotine and nornicotine, effective deterrents against herbivores with antiparasitic and pesticide properties (neurotoxins); nornicotine serves as the precursor in the synthesis of the carcinogen compound N'-nitrosonornicotine (NNN). Required for the biosynthesis of putrescine. Catalyzes the first step of polyamine (PA) biosynthesis to produce putrescine from arginine. The polypeptide is Arginine decarboxylase 1A, chloroplastic (Nicotiana tabacum (Common tobacco)).